The chain runs to 230 residues: 3-beta-hydroxysteroid-Delta(8),Delta(7)-isomerase (230 aa).

Thr-2 carries the N-acetylthreonine modification. Helical transmembrane passes span 29 to 49 (WHILAGLFSVTGVLVVTTWLL), 66 to 86 (LCWFAVCGFIHLVIEGWFVLY), 121 to 141 (METITACLWGPLSLWVVIAFL), and 185 to 205 (FWFYFVFMNALWLVLPGVLVL). The 144-residue stretch at 61–204 (WRRLSLCWFA…LWLVLPGVLV (144 aa)) folds into the EXPERA domain.

Belongs to the EBP family.

It is found in the endoplasmic reticulum membrane. It localises to the nucleus envelope. Its subcellular location is the cytoplasmic vesicle. The enzyme catalyses lathosterol = 5alpha-cholest-8-en-3beta-ol. The catalysed reaction is zymosterol = 5alpha-cholesta-7,24-dien-3beta-ol. It catalyses the reaction 5,6alpha-epoxy-5alpha-cholestan-3beta-ol + H2O = 5alpha-cholestane-3beta,5,6beta-triol. It carries out the reaction 5,6beta-epoxy-5beta-cholestan-3beta-ol + H2O = 5alpha-cholestane-3beta,5,6beta-triol. Its pathway is steroid biosynthesis; cholesterol biosynthesis. With respect to regulation, cholestenol Delta-isomerase and cholesterol-5,6-epoxide hydrolase (ChEH) activities are inhibited by tamoxifen and the selective AEBS ligand (4-benzyl-phenoxy)-ethyl-N-pyrrolidine (PBPE). ChEH activity is inhibited by oleic acid. Functionally, isomerase that catalyzes the conversion of Delta(8)-sterols to their corresponding Delta(7)-isomers a catalytic step in the postlanosterol biosynthesis of cholesterol. In terms of biological role, component of the microsomal antiestrogen binding site (AEBS), a multiproteic complex at the ER membrane that consists of an association between EBP and 7-dehydrocholesterol reductase/DHCR7. This complex is responsible for cholesterol-5,6-epoxide hydrolase (ChEH) activity, which consists in the hydration of cholesterol-5,6-epoxides (5,6-EC) into cholestane-3beta,5alpha,6beta-triol (CT). The precise role of each component of this complex has not been described yet. The polypeptide is 3-beta-hydroxysteroid-Delta(8),Delta(7)-isomerase (Homo sapiens (Human)).